A 200-amino-acid polypeptide reads, in one-letter code: MADPRIEELPDEETKKPTVEELDESSDEESDAEAGDASLPAGSTAVIHSRNEKKARKAIEKLHLTRVPGITRVTLRRPKNILFVINNPEVYKSPNSNTYIVFGEAKIEDLNASAQAAAAQQLANQTAEHDHAGHTHDHKHEAAKEEEEEEDDGEEVDAEGIEDKDIELVMTQANVSRKKAIKALKENDNDIVNSIMALSV.

Over residues 1 to 19 (MADPRIEELPDEETKKPTV) the composition is skewed to basic and acidic residues. 2 disordered regions span residues 1–52 (MADP…SRNE) and 120–165 (QQLA…EDKD). A compositionally biased stretch (acidic residues) spans 20 to 34 (EELDESSDEESDAEA). The region spanning 49–114 (SRNEKKARKA…AKIEDLNASA (66 aa)) is the NAC-A/B domain. Over residues 127-143 (AEHDHAGHTHDHKHEAA) the composition is skewed to basic and acidic residues. The span at 144–160 (KEEEEEEDDGEEVDAEG) shows a compositional bias: acidic residues. In terms of domain architecture, UBA spans 161–200 (IEDKDIELVMTQANVSRKKAIKALKENDNDIVNSIMALSV).

This sequence belongs to the NAC-alpha family. Part of the nascent polypeptide-associated complex (NAC), consisting of EGD2 and EGD1. NAC associates with ribosomes via EGD1.

It is found in the cytoplasm. The protein localises to the nucleus. Functionally, component of the nascent polypeptide-associated complex (NAC), a dynamic component of the ribosomal exit tunnel, protecting the emerging polypeptides from interaction with other cytoplasmic proteins to ensure appropriate nascent protein targeting. The NAC complex also promotes mitochondrial protein import by enhancing productive ribosome interactions with the outer mitochondrial membrane and blocks the inappropriate interaction of ribosomes translating non-secretory nascent polypeptides with translocation sites in the membrane of the endoplasmic reticulum. EGD2 may also be involved in transcription regulation. In Chaetomium globosum (strain ATCC 6205 / CBS 148.51 / DSM 1962 / NBRC 6347 / NRRL 1970) (Soil fungus), this protein is Nascent polypeptide-associated complex subunit alpha (EGD2).